A 245-amino-acid polypeptide reads, in one-letter code: MMKLKVYADRMSQPSRAVIIFCKVNGIQFDEVLISLAKRQQLSPEFKDINPLGKVPAIVDGRLKLFESHAILIYLSSAFPSVADHWYPNDLSKRAKIHSVLDWHHTNLRRGAAGYVLNSVLGPALGLPLNPKAAAEAEQLLTKSLSTLETFWLKGNAKFLLGSNQPSIADLSLVCELMQLQVLDDKDRLRLLSTHKKVEQWIENTKKATMPHFDETHEILFKVKEGFQKRREMGTLSKPGLQSKI.

A GST N-terminal domain is found at 2–83; it reads MKLKVYADRM…YLSSAFPSVA (82 aa). Residues 12–13, 41–42, 54–55, and 67–68 each bind glutathione; these read SQ, QL, KV, and ES. The GST C-terminal domain maps to 90–233; that stretch reads DLSKRAKIHS…KEGFQKRREM (144 aa). The short motif at 243–245 is the Microbody targeting signal element; it reads SKI.

The protein belongs to the GST superfamily. Theta family.

The protein localises to the nucleus. It is found in the peroxisome. It catalyses the reaction RX + glutathione = an S-substituted glutathione + a halide anion + H(+). Functionally, in vitro, possesses glutathione S-transferase activity toward 1-chloro-2,4-dinitrobenzene (CDNB) and p-nitrobenzyl chloride (pNBC), and glutathione peroxidase activity toward cumene hydroperoxide and linoleic acid-13-hydroperoxide. May be involved in the conjugation of reduced glutathione to a wide number of exogenous and endogenous hydrophobic electrophiles and have a detoxification role against certain herbicides. This chain is Glutathione S-transferase T1 (GSTT1), found in Arabidopsis thaliana (Mouse-ear cress).